We begin with the raw amino-acid sequence, 233 residues long: Ribonuclease 3 (233 aa).

In terms of domain architecture, RNase III spans 4-126; that stretch reads LNKLMERLGH…IVGAIYIDAG (123 aa). E39 contributes to the Mg(2+) binding site. D43 is an active-site residue. Mg(2+)-binding residues include D112 and E115. The active site involves E115. The 70-residue stretch at 153–222 folds into the DRBM domain; it reads DAKSLLQEWL…AKRFLELLDD (70 aa).

This sequence belongs to the ribonuclease III family. Homodimer. Mg(2+) is required as a cofactor.

The protein resides in the cytoplasm. It catalyses the reaction Endonucleolytic cleavage to 5'-phosphomonoester.. Its function is as follows. Digests double-stranded RNA. Involved in the processing of primary rRNA transcript to yield the immediate precursors to the large and small rRNAs (23S and 16S). Processes some mRNAs, and tRNAs when they are encoded in the rRNA operon. Processes pre-crRNA and tracrRNA of type II CRISPR loci if present in the organism. This Coxiella burnetii (strain CbuK_Q154) (Coxiella burnetii (strain Q154)) protein is Ribonuclease 3.